The following is a 31-amino-acid chain: Cyclotide mech-4 (31 aa).

Positions 1-31 (GSIPCGESCVYIPCISSLLGCSCKSKVCYKD) form a cross-link, cyclopeptide (Gly-Asp). 3 disulfides stabilise this stretch: C5–C21, C9–C23, and C14–C28.

In terms of processing, this is a cyclic peptide. Post-translationally, contains 3 disulfide bonds.

Functionally, probably participates in a plant defense mechanism (Potential). Binds to and induces leakage in phospholipd membranes, particularly ones containing 1-palmitoyl-2-oleophosphatidylethanolamine (POPE). The sequence is that of Cyclotide mech-4 from Melicytus chathamicus (Chatham Island mahoe).